Consider the following 492-residue polypeptide: Diacylglycerol kinase 7 (492 aa).

Residues 90 to 248 (APHAPMVVFI…SWKIVVSMPS (159 aa)) enclose the DAGKc domain.

This sequence belongs to the eukaryotic diacylglycerol kinase family. Monomer. Highly expressed in flowers, and at low levels in roots, stems and leaves.

It catalyses the reaction a 1,2-diacyl-sn-glycerol + ATP = a 1,2-diacyl-sn-glycero-3-phosphate + ADP + H(+). Phosphorylates the second messenger diacylglycerol (DAG) to generate phosphatidic acid (PA), another important signaling molecule. PA is required for plant development and responses to abiotic stress and pathogen attack. May be involved in the accumulation of PA during cold stress xhibits high specificity for 1,2-dioleoyl-sn-glycerol (1,2-DOG), 1-palmitoyl, 2-oleoyl-sn-glycerol (1,2 POG), 1-stearoyl, 2-linoleoyl-sn-glycerol (1,2-SLG) and 1-oleoyl, 2-palmitoyl-sn-glycerol (1,2-OPG). This Arabidopsis thaliana (Mouse-ear cress) protein is Diacylglycerol kinase 7 (DGK7).